The following is a 1054-amino-acid chain: Kinesin-like protein KIN-7G (1054 aa).

The 325-residue stretch at lysine 17–valine 341 folds into the Kinesin motor domain. Glycine 105–threonine 112 contributes to the ATP binding site. Coiled-coil stretches lie at residues valine 350–alanine 425 and threonine 611–valine 640. 2 disordered regions span residues cysteine 600–serine 648 and glutamate 740–isoleucine 760. Acidic residues predominate over residues threonine 613–glutamate 631.

This sequence belongs to the TRAFAC class myosin-kinesin ATPase superfamily. Kinesin family. KIN-7 subfamily.

This is Kinesin-like protein KIN-7G from Arabidopsis thaliana (Mouse-ear cress).